A 197-amino-acid polypeptide reads, in one-letter code: MTSRPLILGSSSIWRKQVLIDMGYIFKTMSPDIDEKAIRDSDPKTLTLLISRAKAQALLKRIKESDDELDKKSIMICSDQVIVHNGVIREKPETEQQCREYLQSYEFHPAVAVVSVVVVNIETGKIVEGTDIATQHFKKISDEFIDKLIKQGDVMHCAGGFTVEHMADFTLQLEGEVETILGLPKTLTKNLISQVSQ.

Catalysis depends on Asp79, which acts as the Proton acceptor.

The protein belongs to the Maf family. YceF subfamily.

The protein resides in the cytoplasm. It carries out the reaction N(7)-methyl-GTP + H2O = N(7)-methyl-GMP + diphosphate + H(+). Functionally, nucleoside triphosphate pyrophosphatase that hydrolyzes 7-methyl-GTP (m(7)GTP). May have a dual role in cell division arrest and in preventing the incorporation of modified nucleotides into cellular nucleic acids. The sequence is that of 7-methyl-GTP pyrophosphatase from Dictyostelium discoideum (Social amoeba).